A 459-amino-acid polypeptide reads, in one-letter code: MALTLFDTDEYRPPVWKSYLYQLQQEAPHPRRVTCTCEVENRPKYYGREYHGMISREETDQLLSVAEGSYLIRESQRQPGTYTLALRFGSQTRNFRLYYDGKHFVGEKRFESIHDLVTDGLITLYIETKAAEYIAKMTINPIYEHIGYTTLNREPAYKQHMAVLKETHDEKEATGQDGVSEKRLTSLVRRATLKENEQIPKYEKVHNFKVHTFRGPHWCEYCANFMWGLIAQGVKCADCGLNVHKQCSKMVPNDCKPDLKHVKKVYSCDLTTLVKAHITKRPMVVDMCIREIESRGLNSEGLYRVSGFSDLIEDVKMAFDRDGEKADISVNMYEDINIITGALKLYFRDLPIPLITYDAYPKFIESAKIMDPDEQLETLHEALRSLPPAHCETLRYLMAHLKRVTLHEKENLMSAENLGIVFGPTLMRSPELDPMAALNDIRYQRLVVELLIKNEDILF.

Ala2 carries the post-translational modification N-acetylalanine. The SH2 domain occupies 49–135 (EYHGMISREE…IETKAAEYIA (87 aa)). A Phosphothreonine modification is found at Thr192. The segment at 205-255 (VHNFKVHTFRGPHWCEYCANFMWGLIAQGVKCADCGLNVHKQCSKMVPNDC) adopts a Phorbol-ester/DAG-type zinc-finger fold. The Rho-GAP domain maps to 268-459 (CDLTTLVKAH…LLIKNEDILF (192 aa)). Thr340 is modified (phosphothreonine).

In terms of assembly, interacts with EPHA4; effector of EPHA4 in axon guidance linking EPHA4 activation to RAC1 regulation. May also interact with EPHB1 and EPHB2. Phosphorylated. Phosphorylation is EPHA4 kinase activity-dependent.

Its function is as follows. GTPase-activating protein for p21-rac and a phorbol ester receptor. May play an important role in neuronal signal-transduction mechanisms. Involved in the assembly of neuronal locomotor circuits as a direct effector of EPHA4 in axon guidance. This chain is N-chimaerin (Chn1), found in Mus musculus (Mouse).